Consider the following 553-residue polypeptide: Sensitive to high expression protein 9 homolog, mitochondrial (553 aa).

Residues phenylalanine 61–threonine 174 are disordered. A compositionally biased stretch (polar residues) spans phenylalanine 62–valine 84. A compositionally biased stretch (basic and acidic residues) spans alanine 103–threonine 116. Over residues serine 133–asparagine 160 the composition is skewed to low complexity. Coiled coils occupy residues serine 210 to lysine 241 and arginine 277 to alanine 309. The helical transmembrane segment at tryptophan 331–alanine 351 threads the bilayer. The Mitochondrial intermembrane segment spans residues glutamate 352–serine 523. 2 disordered regions span residues alanine 408 to glycine 428 and alanine 443 to serine 497. 2 stretches are compositionally biased toward low complexity: residues alanine 443 to glutamate 473 and threonine 484 to threonine 495. A helical transmembrane segment spans residues leucine 524–valine 544. Residues leucine 545 to alanine 553 lie on the Mitochondrial matrix side of the membrane.

The protein belongs to the SHE9 family. As to quaternary structure, homooligomer.

The protein resides in the mitochondrion inner membrane. Its function is as follows. Required for the maintenance of the structure of the mitochondrial inner membrane. Involved in mitochondrial morphology. Causes growth arrest when highly overexpressed. The polypeptide is Sensitive to high expression protein 9 homolog, mitochondrial (she-9) (Neurospora crassa (strain ATCC 24698 / 74-OR23-1A / CBS 708.71 / DSM 1257 / FGSC 987)).